Reading from the N-terminus, the 374-residue chain is N5-carboxyaminoimidazole ribonucleotide synthase (374 aa).

Residues R108, K148, 153-159 (GYDGKGQ), 183-186 (EKYL), E191, H214, and 266-267 (NE) each bind ATP. Positions 112–296 (KETLKSAGTK…QFDTHILAVT (185 aa)) constitute an ATP-grasp domain.

The protein belongs to the PurK/PurT family. In terms of assembly, homodimer.

It carries out the reaction 5-amino-1-(5-phospho-beta-D-ribosyl)imidazole + hydrogencarbonate + ATP = 5-carboxyamino-1-(5-phospho-D-ribosyl)imidazole + ADP + phosphate + 2 H(+). It functions in the pathway purine metabolism; IMP biosynthesis via de novo pathway; 5-amino-1-(5-phospho-D-ribosyl)imidazole-4-carboxylate from 5-amino-1-(5-phospho-D-ribosyl)imidazole (N5-CAIR route): step 1/2. In terms of biological role, catalyzes the ATP-dependent conversion of 5-aminoimidazole ribonucleotide (AIR) and HCO(3)(-) to N5-carboxyaminoimidazole ribonucleotide (N5-CAIR). This is N5-carboxyaminoimidazole ribonucleotide synthase from Staphylococcus aureus (strain COL).